Here is a 294-residue protein sequence, read N- to C-terminus: Elongation factor Ts (294 aa).

Residues 79 to 82 (TDFV) form an involved in Mg(2+) ion dislocation from EF-Tu region.

Belongs to the EF-Ts family.

Its subcellular location is the cytoplasm. In terms of biological role, associates with the EF-Tu.GDP complex and induces the exchange of GDP to GTP. It remains bound to the aminoacyl-tRNA.EF-Tu.GTP complex up to the GTP hydrolysis stage on the ribosome. This Geobacillus sp. (strain WCH70) protein is Elongation factor Ts.